The sequence spans 735 residues: 5-methyltetrahydropteroyltriglutamate--homocysteine methyltransferase (735 aa).

Residues 15 to 18 (REFK) and lysine 104 contribute to the 5-methyltetrahydropteroyltri-L-glutamate site. L-homocysteine-binding positions include 409–411 (IGS) and glutamate 462. Residues 409-411 (IGS) and glutamate 462 each bind L-methionine. Residues 493–494 (RC) and tryptophan 539 each bind 5-methyltetrahydropteroyltri-L-glutamate. Aspartate 577 is a binding site for L-homocysteine. Aspartate 577 lines the L-methionine pocket. Glutamate 583 provides a ligand contact to 5-methyltetrahydropteroyltri-L-glutamate. Residues histidine 618, cysteine 620, and glutamate 642 each contribute to the Zn(2+) site. The active-site Proton donor is the histidine 672. Cysteine 704 lines the Zn(2+) pocket.

The protein belongs to the vitamin-B12 independent methionine synthase family. The cofactor is Zn(2+).

It catalyses the reaction 5-methyltetrahydropteroyltri-L-glutamate + L-homocysteine = tetrahydropteroyltri-L-glutamate + L-methionine. It participates in amino-acid biosynthesis; L-methionine biosynthesis via de novo pathway; L-methionine from L-homocysteine (MetE route): step 1/1. Catalyzes the transfer of a methyl group from 5-methyltetrahydrofolate to homocysteine resulting in methionine formation. In Thermotoga petrophila (strain ATCC BAA-488 / DSM 13995 / JCM 10881 / RKU-1), this protein is 5-methyltetrahydropteroyltriglutamate--homocysteine methyltransferase.